The following is a 452-amino-acid chain: Lysine-rich nucleolar protein 1 (452 aa).

Disordered regions lie at residues 1–28 (MITK…VKEP), 55–161 (VIQE…AFSG), and 184–305 (REQA…PDTD). K7 participates in a covalent cross-link: Glycyl lysine isopeptide (Lys-Gly) (interchain with G-Cter in SUMO2). The span at 65 to 75 (LVKKKKKKKGH) shows a compositional bias: basic residues. Positions 78–98 (ICEEHLEPEITLRAGRTERSH) are enriched in basic and acidic residues. S112 carries the phosphoserine modification. K126 participates in a covalent cross-link: Glycyl lysine isopeptide (Lys-Gly) (interchain with G-Cter in SUMO2). Over residues 127–139 (TSPDPRQDEEVTR) the composition is skewed to basic and acidic residues. S128 carries the phosphoserine modification. Basic residues-rich tracts occupy residues 140 to 151 (VGKKLKKHKKEK) and 258 to 267 (SVKKKVKSKK). The residue at position 258 (S258) is a Phosphoserine. K280 participates in a covalent cross-link: Glycyl lysine isopeptide (Lys-Gly) (interchain with G-Cter in SUMO2). A compositionally biased stretch (acidic residues) spans 293-305 (VAEEPWEEEPDTD). Positions 300–452 (EEPDTDLEVV…NASKSIKFED (153 aa)) are interaction with ZNF106. The residue at position 304 (T304) is a Phosphothreonine. Glycyl lysine isopeptide (Lys-Gly) (interchain with G-Cter in SUMO2) cross-links involve residues K313, K347, K367, K369, and K401. R424 carries the post-translational modification Omega-N-methylarginine. K436 participates in a covalent cross-link: Glycyl lysine isopeptide (Lys-Gly) (interchain with G-Cter in SUMO2).

Interacts with ZNF106.

It localises to the nucleus. It is found in the nucleolus. The chain is Lysine-rich nucleolar protein 1 (KNOP1) from Bos taurus (Bovine).